Reading from the N-terminus, the 905-residue chain is MGDYVTPGEEPPQPGIYRSEQMCLAQLYLQSDASYQCVAELGELGLVQFRDLNPDVSSFQRKYVNEVRRCDEMERKLRYLEREIKKDQIPMLDTGENPDAPLPREMIDLEATFEKLENELREVNKNEETLKKNFSELTELKHILRKTQTFFEEVDHDRWRILEGGSGRRGRSTEREETRPLIDIGDMDDDSAARMSAQAAMLRLGFVAGVIQRERLPAFERLLWRACRGNVFLRTSEIDDVLNDTVTGDPVNKCVFIIFFQGDHLKTKVKKICEGFRATLYPCPDTPQERREMSIGVMTRIEDLKTVLGQTQDHRHRVLVAASKNVRMWLTKVRKIKSIYHTLNLFNIDVTQKCLIAEVWCPIAELDRIKMALKRGTDESGSQVPSILNRMETNEAPPTYNKTNKFTKGFQNIVDAYGIATYREINPAPYTMISFPFLFAVMFGDMGHGAIMLLAALFFILKEKQLEAARIKDEIFQTFFGGRYVIFLMGAFSIYTGFMYNDVFSKSINTFGSSWQNTIPESVIDYYLDDEKRSESQLILPPETAFDGNPYPIGVDPVWNLAEGNKLSFLNSMKMKMSVLFGIAQMTFGVLLSYQNFIYFKSDLDIKYMFIPQMIFLSSIFIYLCIQILSKWLFFGAVGGTVLGYKYPGSNCAPSLLIGLINMFMMKSRNAGFVDDSGETYPQCYLSTWYPGQATIEIILVVLALVQVPIMLFAKPYFLYRRDKQQSRYSTLTAESNQHQSVRADINQDDAEVVHAPEQTPKPSGHGHGHGDGPLEMGDVMVYQAIHTIEFVLGCVSHTASYLRLWALSLAHAQLSDVLWTMVFRNAFVLDGYTGAIATYILFFIFGSLSVFILVLMEGLSAFLHALRLHWVEFQSKFYGGLGYEFAPFSFEKILAEEREAEENL.

The Cytoplasmic portion of the chain corresponds to 1–424 (MGDYVTPGEE…DAYGIATYRE (424 aa)). Residues 425–443 (INPAPYTMISFPFLFAVMF) traverse the membrane as a helical segment. The Lumenal segment spans residues 444–445 (GD). The helical transmembrane segment at 446–462 (MGHGAIMLLAALFFILK) threads the bilayer. Over 463-477 (EKQLEAARIKDEIFQ) the chain is Cytoplasmic. A helical transmembrane segment spans residues 478-507 (TFFGGRYVIFLMGAFSIYTGFMYNDVFSKS). The Lumenal portion of the chain corresponds to 508–572 (INTFGSSWQN…EGNKLSFLNS (65 aa)). A helical transmembrane segment spans residues 573-592 (MKMKMSVLFGIAQMTFGVLL). The Cytoplasmic segment spans residues 593 to 610 (SYQNFIYFKSDLDIKYMF). Residues 611–631 (IPQMIFLSSIFIYLCIQILSK) traverse the membrane as a helical segment. At 632–699 (WLFFGAVGGT…YPGQATIEII (68 aa)) the chain is on the lumenal side. The helical transmembrane segment at 700 to 719 (LVVLALVQVPIMLFAKPYFL) threads the bilayer. Residues 720–788 (YRRDKQQSRY…DVMVYQAIHT (69 aa)) lie on the Cytoplasmic side of the membrane. Residues 789–813 (IEFVLGCVSHTASYLRLWALSLAHA) form a helical membrane-spanning segment. The Lumenal portion of the chain corresponds to 814-834 (QLSDVLWTMVFRNAFVLDGYT). A helical membrane pass occupies residues 835–873 (GAIATYILFFIFGSLSVFILVLMEGLSAFLHALRLHWVE). Residues 874-905 (FQSKFYGGLGYEFAPFSFEKILAEEREAEENL) are Cytoplasmic-facing.

This sequence belongs to the V-ATPase 116 kDa subunit family. V-ATPase is a heteromultimeric enzyme made up of two complexes: the ATP-hydrolytic V1 complex and the proton translocation V0 complex. The V1 complex consists of three catalytic AB heterodimers that form a heterohexamer, three peripheral stalks each consisting of EG heterodimers, one central rotor including subunits D and F, and the regulatory subunits C and H. The proton translocation complex V0 consists of the proton transport subunit a, a ring of proteolipid subunits c9c'', rotary subunit d, subunits e and f, and the accessory subunits vah-19/Ac45 and vah-20/PRR. Interacts with V-type proton ATPase subunit C vha-11. As to expression, ubiquitous expression in embryos. Expressed in gonads, intestine, neurons in the head and motoneurons in the ventral cord of larvae and adults. Expressed in the vulvae and spermathecal uterine valves. Weakly expressed in the pharynx. Specifically expressed in the nervous system.

Its subcellular location is the membrane. In terms of biological role, subunit of the V0 complex of vacuolar(H+)-ATPase (V-ATPase), a multisubunit enzyme composed of a peripheral complex (V1) that hydrolyzes ATP and a membrane integral complex (V0) that translocates protons. V-ATPase is responsible for acidifying and maintaining the pH of intracellular compartments and in some cell types, is targeted to the plasma membrane, where it is responsible for acidifying the extracellular environment. Required for assembly and activity of the vacuolar ATPase. Regulates the size of gut granules during embryonic development. In neurons, required for necrotic cell death by promoting intracellular acidification. Required for cell death induced by hypoxia. Required for acidification of synaptic vesicles and the release of neurotransmitters from adult neurons. The sequence is that of V-type proton ATPase 116 kDa subunit a 1 from Caenorhabditis elegans.